Here is a 398-residue protein sequence, read N- to C-terminus: Phosphoglycerate kinase (398 aa).

Substrate-binding positions include 24 to 26, Arg-39, 62 to 65, Arg-121, and Arg-154; these read DFN and HFGR. Residues Lys-205, Gly-296, Glu-327, and 354 to 357 each bind ATP; that span reads GGDS.

It belongs to the phosphoglycerate kinase family. In terms of assembly, monomer.

Its subcellular location is the cytoplasm. The catalysed reaction is (2R)-3-phosphoglycerate + ATP = (2R)-3-phospho-glyceroyl phosphate + ADP. It participates in carbohydrate degradation; glycolysis; pyruvate from D-glyceraldehyde 3-phosphate: step 2/5. In Trichodesmium erythraeum (strain IMS101), this protein is Phosphoglycerate kinase.